The primary structure comprises 726 residues: DNA-directed RNA polymerase subunit beta N-terminal section (726 aa).

The protein belongs to the RNA polymerase beta chain family. In plastids the minimal PEP RNA polymerase catalytic core is composed of four subunits: alpha, beta, beta', and beta''. When a (nuclear-encoded) sigma factor is associated with the core the holoenzyme is formed, which can initiate transcription.

The protein resides in the plastid. It localises to the chloroplast. It carries out the reaction RNA(n) + a ribonucleoside 5'-triphosphate = RNA(n+1) + diphosphate. Its function is as follows. DNA-dependent RNA polymerase catalyzes the transcription of DNA into RNA using the four ribonucleoside triphosphates as substrates. The sequence is that of DNA-directed RNA polymerase subunit beta N-terminal section (rpoB1) from Tetradesmus obliquus (Green alga).